The chain runs to 182 residues: Adenine phosphoribosyltransferase (182 aa).

Belongs to the purine/pyrimidine phosphoribosyltransferase family. In terms of assembly, homodimer.

Its subcellular location is the cytoplasm. It carries out the reaction AMP + diphosphate = 5-phospho-alpha-D-ribose 1-diphosphate + adenine. It functions in the pathway purine metabolism; AMP biosynthesis via salvage pathway; AMP from adenine: step 1/1. Functionally, catalyzes a salvage reaction resulting in the formation of AMP, that is energically less costly than de novo synthesis. The polypeptide is Adenine phosphoribosyltransferase (Ectopseudomonas mendocina (strain ymp) (Pseudomonas mendocina)).